The sequence spans 520 residues: AMP-binding domain-containing enzyme iboA (520 aa).

ATP is bound at residue 180-191 (LTSGSTSGSPKV). The FACS signature appears at 397 to 447 (DGNFHTGDLFEKQLDGSYLFRGRGDDWIKSEDSRFIDTKAIEEKINDVCSD).

This sequence belongs to the ATP-dependent AMP-binding enzyme family. Mg(2+) serves as cofactor.

It participates in secondary metabolite biosynthesis. Functionally, AMP-binding domain-containing enzyme; part of the gene cluster that mediates the biosynthesis of the psychoactive metabolites ibotenic acid and muscimol. The first committed step is glutamate hydroxylation by the 2-oxoglutarate-dependent dioxygenase iboH, and the last step is decarboxylation of ibotenic acid to muscimol by the decarboxylase iboD. The order of the intermediate reactions is somewhat ambiguous. IboA likely activates the carboxylic acid at position 5 to introduce an amide bond, and the flavin monooxygenase iboF generates the N-O bond. There are several options for the latter step. One option is that iboF directly hydroxylates the amide nitrogen formed by iboA to produce a hydroxamic acid species. Another option is that iboF hydroxylates an external N-containing compound, whose resulting N-O bond is subsequently introduced into the hydroxyglutamate scaffold. The paralogous PLP-dependent cystathionine gamma-synthase-like enzymes iboG1 and iboG2 are likely involved in substitution of the OH group at position 3 by the O-N moiety. The first cyclic intermediate is most probably tricholomic acid which is likely desaturated to ibotenic acid by the cytochrome P450 monooxygenase iboC. This Amanita muscaria (strain Koide BX008) protein is AMP-binding domain-containing enzyme iboA.